The sequence spans 120 residues: Chaperonin GroEL (120 aa).

D23–T27 provides a ligand contact to ATP.

This sequence belongs to the chaperonin (HSP60) family. As to quaternary structure, forms a cylinder of 14 subunits composed of two heptameric rings stacked back-to-back. Interacts with the co-chaperonin GroES.

The protein localises to the cytoplasm. It carries out the reaction ATP + H2O + a folded polypeptide = ADP + phosphate + an unfolded polypeptide.. Its function is as follows. Together with its co-chaperonin GroES, plays an essential role in assisting protein folding. The GroEL-GroES system forms a nano-cage that allows encapsulation of the non-native substrate proteins and provides a physical environment optimized to promote and accelerate protein folding. The polypeptide is Chaperonin GroEL (Mycobacterium shimoidei).